A 107-amino-acid polypeptide reads, in one-letter code: MMKVLVVVALLVTLISYSSSEGIDDLEADELSSLMANEQTRKECIPKHHECTSNKHGCCRGNFFKYKCQCTTVVTQDGEQTERCFCGTPPHHKAAELVVGFGKKIFG.

An N-terminal signal peptide occupies residues 1 to 20 (MMKVLVVVALLVTLISYSSS). A propeptide spanning residues 21-41 (EGIDDLEADELSSLMANEQTR) is cleaved from the precursor. 4 disulfide bridges follow: C44–C59, C51–C68, C58–C86, and C70–C84.

Belongs to the neurotoxin 19 (CSTX) family. 04 (U1-Lctx) subfamily. Expressed by the venom gland.

The protein resides in the secreted. The chain is U1-lycotoxin-Ls1b from Lycosa singoriensis (Wolf spider).